Consider the following 306-residue polypeptide: Histone-lysine N-methyltransferase SETMAR (306 aa).

The 64-residue stretch at Pro-60–Gly-123 folds into the Pre-SET domain. Residues Cys-62, Cys-64, Cys-69, Cys-74, Cys-76, Cys-105, Cys-109, Cys-111, and Cys-115 each contribute to the Zn(2+) site. The SET domain occupies Phe-126–Ser-250. S-adenosyl-L-methionine contacts are provided by residues Lys-136–Trp-138, Tyr-179, Arg-207, and Asn-210–His-211. Zn(2+) contacts are provided by Cys-213, Cys-274, Cys-276, and Cys-281. In terms of domain architecture, Post-SET spans Leu-270 to Pro-286.

It belongs to the class V-like SAM-binding methyltransferase superfamily.

The protein resides in the nucleus. It is found in the chromosome. It catalyses the reaction L-lysyl(36)-[histone H3] + 2 S-adenosyl-L-methionine = N(6),N(6)-dimethyl-L-lysyl(36)-[histone H3] + 2 S-adenosyl-L-homocysteine + 2 H(+). Histone methyltransferase that methylates 'Lys-4' and 'Lys-36' of histone H3, 2 specific tags for epigenetic transcriptional activation. Specifically mediates dimethylation of H3 'Lys-36'. In Bos taurus (Bovine), this protein is Histone-lysine N-methyltransferase SETMAR.